The primary structure comprises 338 residues: Beta-ketoacyl-[acyl-carrier-protein] synthase III (338 aa).

Residues Cys119 and His261 contribute to the active site. The tract at residues 262–266 is ACP-binding; it reads QANQR. Asn291 is an active-site residue.

Belongs to the thiolase-like superfamily. FabH family. As to quaternary structure, homodimer.

It is found in the cytoplasm. The catalysed reaction is malonyl-[ACP] + acetyl-CoA + H(+) = 3-oxobutanoyl-[ACP] + CO2 + CoA. The protein operates within lipid metabolism; fatty acid biosynthesis. In terms of biological role, catalyzes the condensation reaction of fatty acid synthesis by the addition to an acyl acceptor of two carbons from malonyl-ACP. Catalyzes the first condensation reaction which initiates fatty acid synthesis and may therefore play a role in governing the total rate of fatty acid production. Possesses both acetoacetyl-ACP synthase and acetyl transacylase activities. Its substrate specificity determines the biosynthesis of branched-chain and/or straight-chain of fatty acids. The chain is Beta-ketoacyl-[acyl-carrier-protein] synthase III from Prochlorococcus marinus (strain NATL2A).